The primary structure comprises 141 residues: Hemoglobin subunit beta-C(NA) (141 aa).

The 141-residue stretch at 1–141 (PBKALITGFW…VASALAHRYH (141 aa)) folds into the Globin domain. 2 residues coordinate heme b: histidine 58 and histidine 87.

The protein belongs to the globin family. Heterotetramer of two alpha chains and two beta chains. In terms of tissue distribution, red blood cells.

Involved in oxygen transport from the lung to the various peripheral tissues. The protein is Hemoglobin subunit beta-C(NA) of Ammotragus lervia (Barbary sheep).